Here is a 186-residue protein sequence, read N- to C-terminus: Hydra actinoporin-like toxin 6 (186 aa).

The N-terminal stretch at 1 to 21 is a signal peptide; the sequence is MLVYVCLVVILIQLPFGAAGG. Positions 158 to 160 match the Cell attachment site motif; it reads RAG.

It belongs to the actinoporin family. HALT subfamily. Octamer or nonamer in membranes. Monomer in the soluble state. In vitro, interacts with folate receptor alpha (of target organism). As to expression, expressed female germline during oogenesis.

It localises to the nematocyst. The protein resides in the secreted. Its subcellular location is the target cell membrane. Its function is as follows. Pore-forming protein that forms hydrophilic pores and causes cytolysis. Compared to equinatoxin-2 (AC P61914), it reveals lower cytolysis activity (5-12-fold difference, tested on erythrocytes), a larger pore size (probably 2-3 nm) and different affinity to membrane lipids (100-fold lower affinity to sphingomyelin). Binds to sulfatides. Shows cytolytic activity on HeLa cells, with a different potency than its paralogs (from most potent to less potent: HALT-4&gt;HALT-6~HALT-1&gt;HALT-3&gt;HALT-7&gt;HALT-2). Pore formation is a multi-step process that involves specific recognition of membrane lipid by a protein aromatic residues rich region, firm binding to the membrane (mainly driven by hydrophobic interactions) accompanied by the transfer of the N-terminal region to the lipid-water interface and finally pore formation after oligomerization of monomers. In vitro, binds to the folate receptor alpha (FOLR1), a GPI-anchored membrane protein that plays a major role in the uptake of folate/folic acid into cells via endocytosis, suggesting a possible involvement of this receptor in the mechanism of HALT-1-induced cell lysis. In vivo, does not cause visible paralysis in larvae of the blowfly Sarcophaga faculata, the most common arthropod prey of Hydra. The chain is Hydra actinoporin-like toxin 6 from Hydra vulgaris (Hydra).